The following is a 344-amino-acid chain: tRNA N6-adenosine threonylcarbamoyltransferase (344 aa).

Residues His110 and His114 each coordinate Fe cation. Residues 133 to 137, Asp166, Gly179, and Asn278 contribute to the substrate site; that span reads VMSGA. Residue Asp303 coordinates Fe cation.

It belongs to the KAE1 / TsaD family. Fe(2+) serves as cofactor.

It is found in the cytoplasm. It carries out the reaction L-threonylcarbamoyladenylate + adenosine(37) in tRNA = N(6)-L-threonylcarbamoyladenosine(37) in tRNA + AMP + H(+). Functionally, required for the formation of a threonylcarbamoyl group on adenosine at position 37 (t(6)A37) in tRNAs that read codons beginning with adenine. Is involved in the transfer of the threonylcarbamoyl moiety of threonylcarbamoyl-AMP (TC-AMP) to the N6 group of A37, together with TsaE and TsaB. TsaD likely plays a direct catalytic role in this reaction. This Chlamydia felis (strain Fe/C-56) (Chlamydophila felis) protein is tRNA N6-adenosine threonylcarbamoyltransferase.